The chain runs to 387 residues: MRKHFVLFSFPFLLLSSMLIFYQTTVFRNQLNEENDYTGGPIVPFMKRSLALHYQTCESFLNSLNTTVPVLLIDVDVLKMLDENACNLPTGRPTKIGVDVKYLSATWLLQDSRFEIVYYTNDTEKDFLDFRSEPRKIIPKKFSTCWVENLAVPADIKLFVEFWKRAKFVNCMNLHIPRAGSKVRMPARPSSEVLSRLRDELIENRMFPFLNGGTLLGWYRECSVIPHTLDMDISVFAEDFNLNFVEQMEQNLSDFRIKRKFGMTNDSFELTLAPKTGFKVFIDVFLMYKGVENGSVTHHWVGGVAPDGTKYKYSYPVYDPFCAADLHGHIFWVTCTPNEKIVKEYGQLWYLDHLTSKYSWNSSGKNVKKNGKWTKEQMKMVYKVFKR.

A helical transmembrane segment spans residues 5 to 25; that stretch reads FVLFSFPFLLLSSMLIFYQTT.

This sequence belongs to the LicD transferase family.

It localises to the membrane. This is an uncharacterized protein from Caenorhabditis elegans.